A 161-amino-acid chain; its full sequence is Transcription elongation factor GreB (161 aa).

The protein belongs to the GreA/GreB family. GreB subfamily.

In terms of biological role, necessary for efficient RNA polymerase transcription elongation past template-encoded arresting sites. The arresting sites in DNA have the property of trapping a certain fraction of elongating RNA polymerases that pass through, resulting in locked ternary complexes. Cleavage of the nascent transcript by cleavage factors such as GreA or GreB allows the resumption of elongation from the new 3'terminus. GreB releases sequences of up to 9 nucleotides in length. This chain is Transcription elongation factor GreB, found in Vibrio cholerae serotype O1 (strain ATCC 39315 / El Tor Inaba N16961).